The chain runs to 332 residues: Ferredoxin--NADP reductase 1 (332 aa).

Residues D35, K43, F48, V88, F123, D284, and T325 each coordinate FAD.

This sequence belongs to the ferredoxin--NADP reductase type 2 family. Homodimer. FAD serves as cofactor.

The catalysed reaction is 2 reduced [2Fe-2S]-[ferredoxin] + NADP(+) + H(+) = 2 oxidized [2Fe-2S]-[ferredoxin] + NADPH. The polypeptide is Ferredoxin--NADP reductase 1 (Listeria innocua serovar 6a (strain ATCC BAA-680 / CLIP 11262)).